Reading from the N-terminus, the 208-residue chain is Large ribosomal subunit protein bL25 (208 aa).

The span at 185–195 shows a compositional bias: acidic residues; the sequence is DLEEETGEAEG. Positions 185-208 are disordered; it reads DLEEETGEAEGETAAAPAEEGAES. Residues 196-208 are compositionally biased toward low complexity; sequence ETAAAPAEEGAES.

This sequence belongs to the bacterial ribosomal protein bL25 family. CTC subfamily. Part of the 50S ribosomal subunit; part of the 5S rRNA/L5/L18/L25 subcomplex. Contacts the 5S rRNA. Binds to the 5S rRNA independently of L5 and L18.

Its function is as follows. This is one of the proteins that binds to the 5S RNA in the ribosome where it forms part of the central protuberance. In Rhodococcus opacus (strain B4), this protein is Large ribosomal subunit protein bL25.